Consider the following 375-residue polypeptide: DnaJ homolog subfamily B member 12 (375 aa).

Residue Met1 is modified to N-acetylmethionine. Residues 1–243 (MESNKDEAER…DRRDNQGDGG (243 aa)) are Cytoplasmic-facing. Residues 45-92 (ALIESLNQKPQTAGDQPPPTDTTHATHRKAGGTDAPSANGEAGGESTK) are disordered. Positions 49-58 (SLNQKPQTAG) are enriched in polar residues. The J domain maps to 112-176 (YEILGVSRGA…RKQYDQFGDD (65 aa)). His185 bears the Pros-methylhistidine mark. A helical membrane pass occupies residues 244–264 (LGVFVQLMPILILILVSALSQ). Residues 265–375 (LMVSSPPYSL…LSEVQASLHG (111 aa)) lie on the Lumenal side of the membrane.

It belongs to the DnaJ family. DNAJB12/DNAJB14 subfamily. Homodimer and homotetramer. Interacts (via J domain) with HSPA8/Hsc70. Forms a multiprotein complex, at least composed of DNAJB12, DNAJB14, HSPA8/Hsc70 and SGTA; interaction with DNAJB14 and HSPA8/Hsc70 is direct. Post-translationally, methylated at His-185 by METTL9.

The protein resides in the endoplasmic reticulum membrane. Its subcellular location is the nucleus membrane. Its function is as follows. Acts as a co-chaperone with HSPA8/Hsc70; required to promote protein folding and trafficking, prevent aggregation of client proteins, and promote unfolded proteins to endoplasmic reticulum-associated degradation (ERAD) pathway. Acts by determining HSPA8/Hsc70's ATPase and polypeptide-binding activities. Can also act independently of HSPA8/Hsc70: together with DNAJB14, acts as a chaperone that promotes maturation of potassium channels KCND2 and KCNH2 by stabilizing nascent channel subunits and assembling them into tetramers. While stabilization of nascent channel proteins is dependent on HSPA8/Hsc70, the process of oligomerization of channel subunits is independent of HSPA8/Hsc70. When overexpressed, forms membranous structures together with DNAJB14 and HSPA8/Hsc70 within the nucleus; the role of these structures, named DJANGOs, is still unclear. (Microbial infection) In case of infection by polyomavirus, involved in the virus endoplasmic reticulum membrane penetration and infection. This Homo sapiens (Human) protein is DnaJ homolog subfamily B member 12.